Reading from the N-terminus, the 208-residue chain is Calcyphosin-like protein (208 aa).

EF-hand domains lie at 39–74 (AGIK…YAVV), 75–110 (MEKE…PMSR), 111–146 (ARKE…KHHP), and 154–191 (SEEQ…VSAS). 10 residues coordinate Ca(2+): D52, D54, N56, T58, E63, D88, D90, N92, T94, and E99.

It is found in the cytoplasm. The chain is Calcyphosin-like protein (CAPSL) from Homo sapiens (Human).